The primary structure comprises 753 residues: ATPase family gene 2 protein homolog B (753 aa).

Met1 is modified (N-acetylmethionine). The interval 1–189 (MAPDSDPFPE…PRTRVSLGGE (189 aa)) is required for interaction with AFG2A and CINP. Positions 171-203 (SPDPAGLVTPRTRVSLGGEPPSEAQPQPEVPLG) are disordered. Residues 241 to 248 (GPPGVGKT) and 505 to 512 (GPPGCAKT) each bind ATP.

Belongs to the AAA ATPase family. AFG2 subfamily. Part of the 55LCC heterohexameric ATPase complex composed at least of AIRIM, AFG2A, AFG2B and CINP. Associates with pre-60S ribosomal particles. In terms of tissue distribution, expressed in both neurons and glia during embryonic and adult stages of brain development.

The protein resides in the cytoplasm. The protein localises to the cytoskeleton. Its subcellular location is the spindle. It is found in the nucleus. The enzyme catalyses ATP + H2O = ADP + phosphate + H(+). With respect to regulation, in the context of 55LCC heterohexameric ATPase complex, the ATPase activity is stimulated by DNA binding and inhibited in presence of RNA. In terms of biological role, ATP-dependent chaperone part of the 55LCC heterohexameric ATPase complex which is chromatin-associated and promotes replisome proteostasis to maintain replication fork progression and genome stability. Required for replication fork progression, sister chromatid cohesion, and chromosome stability. The ATPase activity is specifically enhanced by replication fork DNA and is coupled to cysteine protease-dependent cleavage of replisome substrates in response to replication fork damage. Uses ATPase activity to process replisome substrates in S-phase, facilitating their proteolytic turnover from chromatin to ensure DNA replication and mitotic fidelity. Plays an essential role in the cytoplasmic maturation steps of pre-60S ribosomal particles by promoting the release of shuttling protein RSL24D1/RLP24 from the pre-ribosomal particles. This Homo sapiens (Human) protein is ATPase family gene 2 protein homolog B.